We begin with the raw amino-acid sequence, 225 residues long: Agamous-like MADS-box protein TM6 (225 aa).

Residues 1–61 (MGRGKIEIKR…GKFHEYTSPT (61 aa)) enclose the MADS-box domain. Residues 84–174 (YERMQENLRK…LLNFEAKCDD (91 aa)) form the K-box domain.

As to expression, expressed during flower development in stamens, petals and carpels. Expressed in fruits and seeds.

The protein localises to the nucleus. Probable transcription factor involved in flower development. The chain is Agamous-like MADS-box protein TM6 from Vitis vinifera (Grape).